Reading from the N-terminus, the 184-residue chain is Oligoribonuclease (184 aa).

An Exonuclease domain is found at 9–172; it reads LIWIDLEMTG…DDIRESIEEL (164 aa). The active site involves tyrosine 130.

It belongs to the oligoribonuclease family.

It localises to the cytoplasm. Its function is as follows. 3'-to-5' exoribonuclease specific for small oligoribonucleotides. This chain is Oligoribonuclease, found in Actinobacillus pleuropneumoniae serotype 5b (strain L20).